The following is a 70-amino-acid chain: MRLLLSILGVLTLLSILPLARSFLANQECFSEYRHCRMKCKANEYAIRYCADWTICCRVKKREAKKKIMW.

The first 22 residues, 1–22 (MRLLLSILGVLTLLSILPLARS), serve as a signal peptide directing secretion. 2 disulfide bridges follow: cysteine 29–cysteine 57 and cysteine 36–cysteine 50.

Belongs to the beta-defensin family.

The protein localises to the secreted. In terms of biological role, has bactericidal activity. The sequence is that of Beta-defensin 43 (Defb43) from Rattus norvegicus (Rat).